The sequence spans 131 residues: ATP synthase epsilon chain, chloroplastic (131 aa).

The protein belongs to the ATPase epsilon chain family. In terms of assembly, F-type ATPases have 2 components, CF(1) - the catalytic core - and CF(0) - the membrane proton channel. CF(1) has five subunits: alpha(3), beta(3), gamma(1), delta(1), epsilon(1). CF(0) has three main subunits: a, b and c.

It is found in the plastid. The protein localises to the chloroplast thylakoid membrane. Functionally, produces ATP from ADP in the presence of a proton gradient across the membrane. This Guillardia theta (Cryptophyte) protein is ATP synthase epsilon chain, chloroplastic.